The primary structure comprises 298 residues: Foldase protein PrsA 1 (298 aa).

A signal peptide spans 1–23; it reads MNKTWKKAATVLAFAGIALSATA. The N-palmitoyl cysteine moiety is linked to residue Cys24. Cys24 is lipidated: S-diacylglycerol cysteine. The region spanning 141–234 is the PpiC domain; sequence QPEVTVQHIL…YGYHVIKMIK (94 aa).

This sequence belongs to the PrsA family.

Its subcellular location is the cell membrane. It catalyses the reaction [protein]-peptidylproline (omega=180) = [protein]-peptidylproline (omega=0). Its function is as follows. Plays a major role in protein secretion by helping the post-translocational extracellular folding of several secreted proteins. The chain is Foldase protein PrsA 1 (prsA1) from Lactobacillus johnsonii (strain CNCM I-12250 / La1 / NCC 533).